The primary structure comprises 143 residues: Large ribosomal subunit protein uL11 (143 aa).

Belongs to the universal ribosomal protein uL11 family. As to quaternary structure, part of the ribosomal stalk of the 50S ribosomal subunit. Interacts with L10 and the large rRNA to form the base of the stalk. L10 forms an elongated spine to which L12 dimers bind in a sequential fashion forming a multimeric L10(L12)X complex. Post-translationally, one or more lysine residues are methylated.

Its function is as follows. Forms part of the ribosomal stalk which helps the ribosome interact with GTP-bound translation factors. In Chromohalobacter salexigens (strain ATCC BAA-138 / DSM 3043 / CIP 106854 / NCIMB 13768 / 1H11), this protein is Large ribosomal subunit protein uL11.